A 459-amino-acid polypeptide reads, in one-letter code: ATP synthase subunit beta (459 aa).

Residue G148 to T155 participates in ATP binding.

It belongs to the ATPase alpha/beta chains family. As to quaternary structure, F-type ATPases have 2 components, CF(1) - the catalytic core - and CF(0) - the membrane proton channel. CF(1) has five subunits: alpha(3), beta(3), gamma(1), delta(1), epsilon(1). CF(0) has three main subunits: a(1), b(2) and c(9-12). The alpha and beta chains form an alternating ring which encloses part of the gamma chain. CF(1) is attached to CF(0) by a central stalk formed by the gamma and epsilon chains, while a peripheral stalk is formed by the delta and b chains.

Its subcellular location is the cell inner membrane. The catalysed reaction is ATP + H2O + 4 H(+)(in) = ADP + phosphate + 5 H(+)(out). Its function is as follows. Produces ATP from ADP in the presence of a proton gradient across the membrane. The catalytic sites are hosted primarily by the beta subunits. This chain is ATP synthase subunit beta, found in Burkholderia mallei (strain NCTC 10229).